The primary structure comprises 362 residues: tRNA/tmRNA (uracil-C(5))-methyltransferase (362 aa).

Positions 186, 214, 219, 235, and 295 each coordinate S-adenosyl-L-methionine. The active-site Nucleophile is the C320. The active-site Proton acceptor is the E354.

The protein belongs to the class I-like SAM-binding methyltransferase superfamily. RNA M5U methyltransferase family. TrmA subfamily.

It catalyses the reaction uridine(54) in tRNA + S-adenosyl-L-methionine = 5-methyluridine(54) in tRNA + S-adenosyl-L-homocysteine + H(+). The catalysed reaction is uridine(341) in tmRNA + S-adenosyl-L-methionine = 5-methyluridine(341) in tmRNA + S-adenosyl-L-homocysteine + H(+). Functionally, dual-specificity methyltransferase that catalyzes the formation of 5-methyluridine at position 54 (m5U54) in all tRNAs, and that of position 341 (m5U341) in tmRNA (transfer-mRNA). This is tRNA/tmRNA (uracil-C(5))-methyltransferase from Stutzerimonas stutzeri (strain A1501) (Pseudomonas stutzeri).